Here is a 215-residue protein sequence, read N- to C-terminus: Large ribosomal subunit protein uL3 (215 aa).

The tract at residues 136–155 (GVSISHRSHGSTGQRQDPGK) is disordered. Glutamine 151 bears the N5-methylglutamine mark.

This sequence belongs to the universal ribosomal protein uL3 family. Part of the 50S ribosomal subunit. Forms a cluster with proteins L14 and L19. In terms of processing, methylated by PrmB.

Its function is as follows. One of the primary rRNA binding proteins, it binds directly near the 3'-end of the 23S rRNA, where it nucleates assembly of the 50S subunit. This Rickettsia canadensis (strain McKiel) protein is Large ribosomal subunit protein uL3.